Consider the following 326-residue polypeptide: Regulation of nuclear pre-mRNA domain-containing protein 1B (326 aa).

S2 bears the N-acetylserine mark. Residues 2–133 (SSFSESALEK…QLKLSMEDSK (132 aa)) form the CID domain. Basic and acidic residues predominate over residues 128 to 144 (SMEDSKSPPPKAAEEKK). The segment at 128–148 (SMEDSKSPPPKAAEEKKSLKR) is disordered. Phosphoserine is present on residues S132 and S134. Position 161 is a phosphotyrosine (Y161). A phosphoserine mark is found at S166 and S299.

The protein belongs to the UPF0400 (RTT103) family. As to quaternary structure, homodimer. May form a heterodimer with RPRD1A. Associates with RPAP2. Associates with the RNA polymerase II complex. As to expression, widely expressed in the adult with highest levels in liver, colon, prostate and uterus and lowest levels in heart and kidney. Not detected in rectum.

It localises to the nucleus. Interacts with phosphorylated C-terminal heptapeptide repeat domain (CTD) of the largest RNA polymerase II subunit POLR2A, and participates in dephosphorylation of the CTD by RPAP2. Transcriptional regulator which enhances expression of CCND1. Promotes binding of RNA polymerase II to the CCDN1 promoter and to the termination region before the poly-A site but decreases its binding after the poly-A site. Prevents RNA polymerase II from reading through the 3' end termination site and may allow it to be recruited back to the promoter through promotion of the formation of a chromatin loop. Also enhances the transcription of a number of other cell cycle-related genes including CDK2, CDK4, CDK6 and cyclin-E but not CDKN1A, CDKN1B or cyclin-A. Promotes cell proliferation. The sequence is that of Regulation of nuclear pre-mRNA domain-containing protein 1B (Rprd1b) from Mus musculus (Mouse).